A 1220-amino-acid chain; its full sequence is von Willebrand factor A domain-containing protein 5B1 (1220 aa).

An N-terminal signal peptide occupies residues 1-18 (MPGLLNWITGAALPLTAS). The VIT domain occupies 19 to 149 (DVTSCVSGYA…NVTIFISTSS (131 aa)). Asn-140 carries N-linked (GlcNAc...) asparagine glycosylation. The region spanning 361-529 (EFIFLIDRSS…RLQPKMVKSL (169 aa)) is the VWFA domain. Asn-650 is a glycosylation site (N-linked (GlcNAc...) asparagine). The interval 715 to 807 (NSGQDLNQGP…SPSRPATPAP (93 aa)) is disordered. A compositionally biased stretch (basic and acidic residues) spans 757–774 (VRERTSDSRSPGDLEPSH). Over residues 796-807 (RASPSRPATPAP) the composition is skewed to low complexity. Tyr-881 carries the phosphotyrosine modification. Disordered stretches follow at residues 937–962 (RGTS…GKFQ) and 976–995 (EARS…QRSL). N-linked (GlcNAc...) asparagine glycosylation occurs at Asn-1017. Positions 1093-1111 (TTRPSESKTPSPQLCTSSP) are enriched in polar residues. Positions 1093-1115 (TTRPSESKTPSPQLCTSSPPRHP) are disordered.

The protein resides in the secreted. The polypeptide is von Willebrand factor A domain-containing protein 5B1 (VWA5B1) (Homo sapiens (Human)).